The sequence spans 350 residues: F(420)H(2) dehydrogenase subunit H (350 aa).

8 helical membrane-spanning segments follow: residues 21 to 41 (GTVGLVLVGAIFLGGMAAVWI), 94 to 114 (VFMLTSLFLMLVAIPVGAVFI), 128 to 148 (ISILFIEAVSAINIFGIFMAA), 173 to 193 (PLGIAIVSVAVMTGSLNIIDI), 200 to 220 (FVWNIFLQPIGFVVFFIALMA), 261 to 281 (ILGSFLVALLFLGGWNVPAFV), 288 to 308 (GLIAPTGILLLKTVLVLMTII), and 330 to 350 (LLPLSLLNLAWAVGLGLYLGA).

This sequence belongs to the complex I subunit 1 family. In terms of assembly, the FPO complex is composed of at least 13 different subunits. FpoA, FpoH, FpoJ, FpoK, FpoL, FpoM and FpoN proteins constitute the membrane sector of the complex.

It localises to the cell membrane. The enzyme catalyses methanophenazine + reduced coenzyme F420-(gamma-L-Glu)(n) = dihydromethanophenazine + oxidized coenzyme F420-(gamma-L-Glu)(n) + H(+). Component of the F(420)H(2) dehydrogenase (FPO complex) which is part of the energy-conserving F(420)H(2):heterodisulfide oxidoreductase system. The membrane-bound electron transfer system of the complex plays an important role in the metabolism of methylotrophic methanogens when the organisms grow on methanol or methylamines. Catalyzes the oxidation of methanophenazine to dihydromethanophenazine. It shuttles electrons from F(420)H(2), via FAD and iron-sulfur (Fe-S) centers, to methanophenazine (an electron carrier in the membrane). It couples the redox reaction to proton translocation (for every two electrons transferred, two hydrogen ions are translocated across the cytoplasmic membrane), and thus conserves the redox energy in a proton gradient. It also catalyzes the oxidation of F(420)H(2) with quinones such as 2,3-dimethyl-1,4-naphthoquinone, 2-methyl-1,4-naphthoquinone and tetramethyl-p-benzoquinone. The sequence is that of F(420)H(2) dehydrogenase subunit H from Methanosarcina mazei (strain ATCC BAA-159 / DSM 3647 / Goe1 / Go1 / JCM 11833 / OCM 88) (Methanosarcina frisia).